The sequence spans 481 residues: Rhamnogalacturonan I rhamnosyltransferase 4 (481 aa).

The chain crosses the membrane as a helical; Signal-anchor for type II membrane protein span at residues 33 to 55; sequence VWFFRVCSCILVWTCLIQLFWHS. Residues Asn85 and Asn118 are each glycosylated (N-linked (GlcNAc...) asparagine). 258–260 serves as a coordination point for substrate; the sequence is HLR. Residues Asn372 and Asn432 are each glycosylated (N-linked (GlcNAc...) asparagine).

This sequence belongs to the glycosyltransferase GT106 family.

The protein localises to the golgi apparatus membrane. It carries out the reaction alpha-D-galacturonosyl-[(1-&gt;2)-alpha-L-rhamnosyl-(1-&gt;4)-alpha-D-galacturonosyl](n) + UDP-beta-L-rhamnose = [(1-&gt;2)-alpha-L-rhamnosyl-(1-&gt;4)-alpha-D-galacturonosyl](n+1) + UDP + H(+). It functions in the pathway glycan metabolism; pectin biosynthesis. Functionally, glycosyltransferase involved in the formation of rhamnogalacturonan I (RG-I) oligosaccharides in the seed coat mucilage, which is a specialized cell wall with abundant RG-I. Transfers the rhamnose residue from UDP-beta-L-rhamnose to RG-I oligosaccharides. This Arabidopsis thaliana (Mouse-ear cress) protein is Rhamnogalacturonan I rhamnosyltransferase 4.